Consider the following 171-residue polypeptide: Ribosome maturation factor RimM (171 aa).

The PRC barrel domain maps to 97 to 170 (EGEYYYHEII…LVTIHVMEGL (74 aa)).

This sequence belongs to the RimM family. Binds ribosomal protein uS19.

The protein resides in the cytoplasm. An accessory protein needed during the final step in the assembly of 30S ribosomal subunit, possibly for assembly of the head region. Essential for efficient processing of 16S rRNA. May be needed both before and after RbfA during the maturation of 16S rRNA. It has affinity for free ribosomal 30S subunits but not for 70S ribosomes. The chain is Ribosome maturation factor RimM from Bacillus cereus (strain ATCC 14579 / DSM 31 / CCUG 7414 / JCM 2152 / NBRC 15305 / NCIMB 9373 / NCTC 2599 / NRRL B-3711).